The sequence spans 302 residues: 4-diphosphocytidyl-2-C-methyl-D-erythritol kinase (302 aa).

Residue Lys27 is part of the active site. 110-120 (PMGGGVGGGSS) is a binding site for ATP. Residue Asp152 is part of the active site.

This sequence belongs to the GHMP kinase family. IspE subfamily.

The enzyme catalyses 4-CDP-2-C-methyl-D-erythritol + ATP = 4-CDP-2-C-methyl-D-erythritol 2-phosphate + ADP + H(+). Its pathway is isoprenoid biosynthesis; isopentenyl diphosphate biosynthesis via DXP pathway; isopentenyl diphosphate from 1-deoxy-D-xylulose 5-phosphate: step 3/6. Functionally, catalyzes the phosphorylation of the position 2 hydroxy group of 4-diphosphocytidyl-2C-methyl-D-erythritol. The protein is 4-diphosphocytidyl-2-C-methyl-D-erythritol kinase of Mannheimia succiniciproducens (strain KCTC 0769BP / MBEL55E).